The primary structure comprises 474 residues: Salutaridinol 7-O-acetyltransferase (474 aa).

Residue H163 is the Proton acceptor of the active site. Residues 213-234 (ERLTSPSGMSEIPFSSTPEDTE) form a disordered region. The span at 214 to 230 (RLTSPSGMSEIPFSSTP) shows a compositional bias: polar residues. Residue D416 is the Proton acceptor of the active site.

The protein belongs to the plant acyltransferase family. As to expression, expressed in root, stem, leaf and capsule of the mature plant. Restricted to sieve elements of the phloem adjacent or proximal to laticifers.

The enzyme catalyses (7S)-salutaridinol + acetyl-CoA = (7S)-O-acetylsalutaridinol + CoA. The protein operates within alkaloid biosynthesis; morphine biosynthesis. Functionally, acetyltransferase involved in biosynthesis of morphinan-type benzylisoquinoline and opiate alkaloids natural products. Catalyzes the conversion of the phenanthrene alkaloid salutaridinol to salutaridinol-7-O-acetate, the immediate precursor of thebaine along the morphine biosynthetic pathway. Conversion of 7-O-acetylsalutaridinol into thebaine is spontaneous. This Papaver somniferum (Opium poppy) protein is Salutaridinol 7-O-acetyltransferase.